The sequence spans 670 residues: Solute carrier organic anion transporter family member 1A2 (670 aa).

Residues 1–20 (MGETEKRIETHRIRCLSKLK) lie on the Cytoplasmic side of the membrane. Residues 21-40 (MFLLAITCAFVSKTLSGSYM) traverse the membrane as a helical segment. Residues 41-59 (NSMLTQIERQFNIPTSLVG) are Extracellular-facing. The helical transmembrane segment at 60–80 (FINGSFEIGNLLLIIFVSYFG) threads the bilayer. At 81–86 (TKLHRP) the chain is on the cytoplasmic side. Residues 87–111 (IMIGIGCVVMGLGCFLKSLPHFLMN) form a helical membrane-spanning segment. Topologically, residues 112–155 (QYEYESTVSVSGNLSSNSFLCMENGTQILRPTQDPSECTKEVKS) are extracellular. Residues Asn124 and Asn135 are each glycosylated (N-linked (GlcNAc...) asparagine). Residues 156–184 (LMWVYVLVGNIVRGMGETPILPLGISYIE) form a helical membrane-spanning segment. Residues 185 to 203 (DFAKFENSPLYIGLVETGA) lie on the Cytoplasmic side of the membrane. Residues 204-224 (IIGPLIGLLLASFCANVYVDT) form a helical membrane-spanning segment. Residues 225–242 (GFVNTDDLIITPTDTRWV) are Extracellular-facing. Residues 243–267 (GAWWFGFLICAGVNVLTAIPFFFLP) form a helical membrane-spanning segment. Topologically, residues 268-311 (NTLPKEGLETNADIIKNENEDKQKEEVKKEKYGITKDFLPFMKS) are cytoplasmic. The chain crosses the membrane as a helical span at residues 312 to 333 (LSCNPIYMLFILVSVIQFNAFV). Topologically, residues 334 to 353 (NMISFMPKYLEQQYGISSSD) are extracellular. A helical transmembrane segment spans residues 354–377 (AIFLMGIYNLPPICIGYIIGGLIM). Residues 378-381 (KKFK) are Cytoplasmic-facing. A helical membrane pass occupies residues 382-405 (ITVKQAAHIGCWLSLLEYLLYFLS). The Extracellular portion of the chain corresponds to 406-513 (FLMTCENSSV…PDCSLMLQYF (108 aa)). Asn412 and Asn419 each carry an N-linked (GlcNAc...) asparagine glycan. The Kazal-like domain occupies 433–488 (NDIFADCNVDCNCPSKIWDPVCGNNGLSYLSACLAGCETSIGTGINMVFQNCSCIQ). Disulfide bonds link Cys439–Cys469, Cys445–Cys465, and Cys454–Cys486. Residues 514–536 (LILSAMSSFIYSLAAIPGYMVLL) traverse the membrane as a helical segment. Residues 537 to 545 (RCMKSEEKS) lie on the Cytoplasmic side of the membrane. A helical transmembrane segment spans residues 546–571 (LGVGLHTFCTRVFAGIPAPIYFGALM). The Extracellular segment spans residues 572-605 (DSTCLHWGTLKCGESGACRIYDSTTFRYIYLGLP). A helical membrane pass occupies residues 606–623 (AALRGSSFVPALIILILL). The Cytoplasmic portion of the chain corresponds to 624–670 (RKCHLPGENASSGTELIETKVKGKENECKDIYQKSTVLKDDELKTKL).

The protein belongs to the organo anion transporter (TC 2.A.60) family. Higher expression in the brain than in liver and kidney. Expressed in brain neurons in both cortex and hippocampus. Expressed in placental trophoblasts. Also expressed in lung and testes at lower levels. Expressed in the eye (at protein level). Expressed in the retina in the outer and inner nuclear layers, the inner plexiform layer and the ganglion cell layer. Expressed in liver and prostate. In testis, primarily localized to the basal membrane of Sertoli cells and weakly expressed in Leydig cells and within the tubules. Expressed in fetal brain and liver.

The protein resides in the cell membrane. Its subcellular location is the basal cell membrane. It catalyses the reaction taurocholate(out) = taurocholate(in). The catalysed reaction is glycocholate(out) = glycocholate(in). It carries out the reaction taurochenodeoxycholate(out) = taurochenodeoxycholate(in). The enzyme catalyses tauroursodeoxycholate(out) = tauroursodeoxycholate(in). It catalyses the reaction dehydroepiandrosterone 3-sulfate(out) = dehydroepiandrosterone 3-sulfate(in). The catalysed reaction is estrone 3-sulfate(out) = estrone 3-sulfate(in). It carries out the reaction 3,3',5'-triiodo-L-thyronine(out) = 3,3',5'-triiodo-L-thyronine(in). The enzyme catalyses L-thyroxine(out) = L-thyroxine(in). It catalyses the reaction taurodeoxycholate(out) = taurodeoxycholate(in). The catalysed reaction is glycodeoxycholate(out) = glycodeoxycholate(in). It carries out the reaction glycochenodeoxycholate(out) = glycochenodeoxycholate(in). The enzyme catalyses glycoursodeoxycholate(out) = glycoursodeoxycholate(in). It catalyses the reaction 17beta-estradiol 17-O-(beta-D-glucuronate)(out) = 17beta-estradiol 17-O-(beta-D-glucuronate)(in). The catalysed reaction is prostaglandin E2(out) = prostaglandin E2(in). It carries out the reaction substance P(out) = substance P(in). With respect to regulation, transport activity is inhibited by the grapefruit juice component naringin. In terms of biological role, na(+)-independent transporter that mediates the cellular uptake of a broad range of organic anions such as the endogenous bile salts cholate and deoxycholate, either in their unconjugated or conjugated forms (taurocholate and glycocholate), at the plasmam membrane. Responsible for intestinal absorption of bile acids. Transports dehydroepiandrosterone 3-sulfate (DHEAS), a major circulating steroid secreted by the adrenal cortex, as well as estrone 3-sulfate and 17beta-estradiol 17-O-(beta-D-glucuronate). Mediates apical uptake of all-trans-retinol (atROL) across human retinal pigment epithelium, which is essential to maintaining the integrity of the visual cycle and thus vision. Involved in the uptake of clinically used drugs. Capable of thyroid hormone transport (both T3 or 3,3',5'-triiodo-L-thyronine, and T4 or L-tyroxine). Also transports prostaglandin E2. Plays roles in blood-brain and -cerebrospinal fluid barrier transport of organic anions and signal mediators, and in hormone uptake by neural cells. May also play a role in the reuptake of neuropeptides such as substance P/TAC1 and vasoactive intestinal peptide/VIP released from retinal neurons. May play an important role in plasma and tissue distribution of the structurally diverse chemotherapeutic drugs methotrexate and paclitaxel. Shows a pH-sensitive substrate specificity which may be ascribed to the protonation state of the binding site and leads to a stimulation of substrate transport in an acidic microenvironment. Hydrogencarbonate/HCO3(-) acts as the probable counteranion that exchanges for organic anions. May contribute to regulate the transport of organic compounds in testis across the blood-testis-barrier. The polypeptide is Solute carrier organic anion transporter family member 1A2 (SLCO1A2) (Homo sapiens (Human)).